A 141-amino-acid chain; its full sequence is Endoribonuclease YbeY (141 aa).

Residues H107, H111, and H117 each contribute to the Zn(2+) site.

This sequence belongs to the endoribonuclease YbeY family. It depends on Zn(2+) as a cofactor.

The protein localises to the cytoplasm. Functionally, single strand-specific metallo-endoribonuclease involved in late-stage 70S ribosome quality control and in maturation of the 3' terminus of the 16S rRNA. This is Endoribonuclease YbeY from Leptospira interrogans serogroup Icterohaemorrhagiae serovar Lai (strain 56601).